Here is a 197-residue protein sequence, read N- to C-terminus: CASP-like protein 1B1 (197 aa).

Ala-2 bears the N-acetylalanine mark. Topologically, residues 2–17 (AVSKLTLAATSGKSCK) are cytoplasmic. Residues 18 to 38 (ILLGLRLLAFSATLSAAIVMG) form a helical membrane-spanning segment. The Extracellular segment spans residues 39-69 (LNKETKTFIVGKVGNTPIQATFTAKFDHTPA). The chain crosses the membrane as a helical span at residues 70-90 (FVFFVVANAMVSFHNLLMIAL). At 91 to 106 (QIFGGKMEFTGFRLLS) the chain is on the cytoplasmic side. A helical membrane pass occupies residues 107–127 (VAILDMLNVTLISAAANAAAF). Residues 128 to 156 (MAEVGKNGNKHARWDKICDRFATYCDHGA) lie on the Extracellular side of the membrane. The chain crosses the membrane as a helical span at residues 157 to 177 (GALIAAFAGVILMLIISAASI). The Cytoplasmic portion of the chain corresponds to 178 to 197 (SRLVQPNKCCSTTASPSVVP).

Belongs to the Casparian strip membrane proteins (CASP) family. In terms of assembly, homodimer and heterodimers.

The protein localises to the cell membrane. This chain is CASP-like protein 1B1, found in Arabidopsis thaliana (Mouse-ear cress).